A 466-amino-acid chain; its full sequence is Asparagine--tRNA ligase (466 aa).

This sequence belongs to the class-II aminoacyl-tRNA synthetase family. Homodimer.

The protein resides in the cytoplasm. It catalyses the reaction tRNA(Asn) + L-asparagine + ATP = L-asparaginyl-tRNA(Asn) + AMP + diphosphate + H(+). This chain is Asparagine--tRNA ligase, found in Salmonella paratyphi A (strain ATCC 9150 / SARB42).